The following is a 112-amino-acid chain: Large ribosomal subunit protein uL22 (112 aa).

This sequence belongs to the universal ribosomal protein uL22 family. As to quaternary structure, part of the 50S ribosomal subunit.

In terms of biological role, this protein binds specifically to 23S rRNA; its binding is stimulated by other ribosomal proteins, e.g. L4, L17, and L20. It is important during the early stages of 50S assembly. It makes multiple contacts with different domains of the 23S rRNA in the assembled 50S subunit and ribosome. Functionally, the globular domain of the protein is located near the polypeptide exit tunnel on the outside of the subunit, while an extended beta-hairpin is found that lines the wall of the exit tunnel in the center of the 70S ribosome. This is Large ribosomal subunit protein uL22 from Legionella pneumophila subsp. pneumophila (strain Philadelphia 1 / ATCC 33152 / DSM 7513).